Reading from the N-terminus, the 564-residue chain is Nucleoprotein (564 aa).

The binding site for the cap structure m7GTP stretch occupies residues 54–236 (LRKTKRGEED…VTKDESSINI (183 aa)). Mn(2+) is bound by residues Asp-380 and Glu-382. Glu-390, Cys-497, His-500, and Cys-525 together coordinate Zn(2+). Residue Asp-529 coordinates Mn(2+).

It belongs to the arenaviridae nucleocapsid protein family. In terms of assembly, homomultimerizes to form the nucleocapsid. Binds to viral genomic RNA. Interacts with glycoprotein G2. Interacts with protein Z; this interaction probably directs the encapsidated genome to budding sites. Interacts with protein L; this interaction does not interfere with Z-L interaction. Interacts with host IKBKE (via Protein kinase domain); the interaction inhibits IKBKE kinase activity.

The protein resides in the virion. The protein localises to the host cytoplasm. Functionally, encapsidates the genome, protecting it from nucleases. The encapsidated genomic RNA is termed the nucleocapsid (NC). Serves as template for viral transcription and replication. The increased presence of protein N in host cell does not seem to trigger the switch from transcription to replication as observed in other negative strain RNA viruses. Through the interaction with host IKBKE, strongly inhibits the phosphorylation and nuclear translocation of host IRF3, a protein involved in interferon activation pathway, leading to the inhibition of interferon-beta and IRF3-dependent promoters activation. Also encodes a functional 3'-5' exoribonuclease that degrades preferentially dsRNA substrates and thereby participates in the suppression of interferon induction. The protein is Nucleoprotein of Akodon azarae (Azara's grass mouse).